The sequence spans 432 residues: D-amino acid dehydrogenase (432 aa).

3-17 serves as a coordination point for FAD; it reads VLVLGSGVVGTASAY.

Belongs to the DadA oxidoreductase family. Requires FAD as cofactor.

The enzyme catalyses a D-alpha-amino acid + A + H2O = a 2-oxocarboxylate + AH2 + NH4(+). Its pathway is amino-acid degradation; D-alanine degradation; NH(3) and pyruvate from D-alanine: step 1/1. Functionally, oxidative deamination of D-amino acids. This chain is D-amino acid dehydrogenase, found in Stutzerimonas stutzeri (strain A1501) (Pseudomonas stutzeri).